We begin with the raw amino-acid sequence, 134 residues long: uncharacterized protein (134 aa).

The N-terminal stretch at 1-26 (MRLYKAMALCLPLVVICTSEVSQSTA) is a signal peptide. The segment at 77-98 (GEKNEEVAGPVDGEGSEEEAFD) is disordered.

This is an uncharacterized protein from Encephalitozoon cuniculi (strain GB-M1) (Microsporidian parasite).